A 132-amino-acid chain; its full sequence is Fatty acid-binding protein, intestinal (132 aa).

A2 is modified (N-acetylalanine). Hexadecanoate is bound by residues W83 and R107. Residues W83 and R107 each coordinate tetradecanoate.

It belongs to the calycin superfamily. Fatty-acid binding protein (FABP) family.

The protein resides in the cytoplasm. Functionally, FABPs are thought to play a role in the intracellular transport of long-chain fatty acids and their acyl-CoA esters. FABP2 is probably involved in triglyceride-rich lipoprotein synthesis. Binds saturated long-chain fatty acids with a high affinity, but binds with a lower affinity to unsaturated long-chain fatty acids. FABP2 may also help maintain energy homeostasis by functioning as a lipid sensor. The chain is Fatty acid-binding protein, intestinal (FABP2) from Bos taurus (Bovine).